A 280-amino-acid chain; its full sequence is Transcription factor MYB46 (280 aa).

HTH myb-type domains are found at residues 15 to 67 and 68 to 122; these read VKKM…INYL and RPDL…KKRL. DNA-binding regions (H-T-H motif) lie at residues 43–67 and 95–118; these read WSDV…INYL and WSQI…NSTI. The interval 129–150 is disordered; the sequence is SNLINNSSSSPNTASDSSSNSA.

As to expression, expressed at low levels in stems and siliques, specifically in xylem.

Its subcellular location is the nucleus. Functionally, transcription activator. Involved in the regulation of secondary wall biosynthesis in fibers and vessels. Transcription activator of the mannan synthase CSLA9 that recognizes and binds to the DNA consensus sequence 5'-[AG][GT]T[AT]GGT[GA]-3' cis-regulatory element of CSLA9 promoter. Transcription factor that acts as a molecular switch in the NAC012/SND1-mediated transcriptional network regulating secondary wall biosynthesis. Is directly activated by NAC012/SND1. Functions redundantly with MYB83 in the transcriptional regulatory cascade leading to secondary wall formation in fibers and vessels. Transcription activator that binds to the DNA consensus sequence 5'-ACC[AT]A[AC][TC]-3', designated as the secondary wall MYB-responsive element (SMRE). Regulates directly numerous transcription factors and a number of genes involved in secondary wall biosynthesis that contain SMRE elements in their promoters. Is an obligate component of the transcriptional regulatory complex toward the commitment of secondary wall cellulose synthesis. Is required for functional expression of the three secondary wall CESA genes, CESA4, CESA7 and CESA8. This is Transcription factor MYB46 from Arabidopsis thaliana (Mouse-ear cress).